The primary structure comprises 305 residues: MAFAGKRLKGLIAATFTPMTSNSDINLAAIEQYVDYLVQKQHIRNIFVNGTTGEGMSLSVHERKSLAEEWVKQARGKMNDVIVHVGCLSLSDSKDLAAHAASCGADAISTVCPSFLKPSSLDALVLYLKEVASAAPNLPFYYYHIPRLTGITYQIYELLGKVKKNIPSFRGVKFSDVNLMDFSLCVSEYKEFDCLYGVDEQLLGALAFGAHGAVGSTYNYLGKKNGDMMAAFEEGNLQKARKIQCSLQEFLIFVFDMGWGLAEFKDIMSQVSGIPLGPSRLPLYSSMKFDHHDNIKTKMLKLDLI.

2 residues coordinate aceneuramate: Thr-51 and Thr-52. Tyr-143 acts as the Proton donor in catalysis. The active-site Schiff-base intermediate with substrate is the Lys-173. Ser-175, Gly-197, Asp-199, Glu-200, and Ser-216 together coordinate aceneuramate.

This sequence belongs to the DapA family. NanA subfamily. Homotetramer.

It is found in the cytoplasm. The catalysed reaction is aceneuramate = aldehydo-N-acetyl-D-mannosamine + pyruvate. It participates in amino-sugar metabolism; N-acetylneuraminate degradation. Its function is as follows. Catalyzes the cleavage of N-acetylneuraminic acid (sialic acid) to form pyruvate and N-acetylmannosamine via a Schiff base intermediate. It prevents sialic acids from being recycled and returning to the cell surface. Involved in the N-glycolylneuraminic acid (Neu5Gc) degradation pathway. This chain is N-acetylneuraminate lyase A (npl-a), found in Xenopus laevis (African clawed frog).